A 333-amino-acid chain; its full sequence is tRNA N6-adenosine threonylcarbamoyltransferase (333 aa).

Fe cation is bound by residues His111 and His115. Residues Leu134–Gly138, Asp167, Gly180, and Asn273 each bind substrate. A Fe cation-binding site is contributed by Asp301.

The protein belongs to the KAE1 / TsaD family. Fe(2+) serves as cofactor.

It localises to the cytoplasm. The enzyme catalyses L-threonylcarbamoyladenylate + adenosine(37) in tRNA = N(6)-L-threonylcarbamoyladenosine(37) in tRNA + AMP + H(+). In terms of biological role, required for the formation of a threonylcarbamoyl group on adenosine at position 37 (t(6)A37) in tRNAs that read codons beginning with adenine. Is involved in the transfer of the threonylcarbamoyl moiety of threonylcarbamoyl-AMP (TC-AMP) to the N6 group of A37, together with TsaE and TsaB. TsaD likely plays a direct catalytic role in this reaction. In Desulforapulum autotrophicum (strain ATCC 43914 / DSM 3382 / VKM B-1955 / HRM2) (Desulfobacterium autotrophicum), this protein is tRNA N6-adenosine threonylcarbamoyltransferase.